A 206-amino-acid polypeptide reads, in one-letter code: Outer-membrane lipoprotein carrier protein (206 aa).

The N-terminal stretch at 1-21 is a signal peptide; sequence MKKLLCAVLLSPLLYSNAVLA.

It belongs to the LolA family. As to quaternary structure, monomer.

It is found in the periplasm. Functionally, participates in the translocation of lipoproteins from the inner membrane to the outer membrane. Only forms a complex with a lipoprotein if the residue after the N-terminal Cys is not an aspartate (The Asp acts as a targeting signal to indicate that the lipoprotein should stay in the inner membrane). The polypeptide is Outer-membrane lipoprotein carrier protein (Shewanella sp. (strain MR-4)).